The following is a 339-amino-acid chain: MSGMPPHIPVLLKEVRSALRLGEGPGIVVDGTFGAGGYTRAILEADPGQRVIAIDRDPTAIATGRGLAAAMAGRLMLVQGRFGELDRLVRAQGIETVDGVVLDIGVSSMQLDQAQRGFSFRQDGPLDMRMESGGTSAADLVNEASEAELADIIYHYGEERRARAVARAILEARRRGRIATTATLAEIVASVVRPEPGSGIHPATRTFQALRIAVNDELGELQRALHAAERILRPGGRLAVVTFHSLEDRIVKQFFSARSGRAVSASRHLPMAEKPAPRSFTLVTKGPIGPSEAEATANPRARSAKLRAGERTDAPIPEPLTALAALAALPSRERGGGRR.

S-adenosyl-L-methionine contacts are provided by residues 36–38, Asp-55, Phe-82, Asp-103, and Gln-110; that span reads GGY. The segment at 286–319 is disordered; that stretch reads GPIGPSEAEATANPRARSAKLRAGERTDAPIPEP.

This sequence belongs to the methyltransferase superfamily. RsmH family.

It localises to the cytoplasm. The enzyme catalyses cytidine(1402) in 16S rRNA + S-adenosyl-L-methionine = N(4)-methylcytidine(1402) in 16S rRNA + S-adenosyl-L-homocysteine + H(+). Functionally, specifically methylates the N4 position of cytidine in position 1402 (C1402) of 16S rRNA. This Methylobacterium nodulans (strain LMG 21967 / CNCM I-2342 / ORS 2060) protein is Ribosomal RNA small subunit methyltransferase H.